We begin with the raw amino-acid sequence, 296 residues long: uncharacterized protein (296 aa).

This sequence to Synechocystis PCC 6803 sll0787 and M.jannaschii MJ0640.

This is an uncharacterized protein from Methanocaldococcus jannaschii (strain ATCC 43067 / DSM 2661 / JAL-1 / JCM 10045 / NBRC 100440) (Methanococcus jannaschii).